A 335-amino-acid chain; its full sequence is Malate dehydrogenase (335 aa).

11–17 lines the NAD(+) pocket; the sequence is GAAGQIG. 2 residues coordinate substrate: R94 and R100. NAD(+)-binding positions include N107, Q114, and 131 to 133; that span reads VGN. Residues N133 and R167 each contribute to the substrate site. H192 serves as the catalytic Proton acceptor.

The protein belongs to the LDH/MDH superfamily. MDH type 2 family.

The enzyme catalyses (S)-malate + NAD(+) = oxaloacetate + NADH + H(+). Catalyzes the reversible oxidation of malate to oxaloacetate. This chain is Malate dehydrogenase, found in Bdellovibrio bacteriovorus (strain ATCC 15356 / DSM 50701 / NCIMB 9529 / HD100).